The following is a 288-amino-acid chain: Alpha/beta hydrolase domain-containing protein 17B (288 aa).

Residues S170, D235, and H264 each act as charge relay system in the active site.

It belongs to the AB hydrolase superfamily. ABHD17 family. Post-translationally, palmitoylated on cysteine residues located in a cysteine cluster at the N-terminus which promotes membrane localization.

Its subcellular location is the cell membrane. The protein resides in the recycling endosome membrane. The protein localises to the cell projection. It is found in the dendritic spine. It localises to the postsynaptic density membrane. The enzyme catalyses S-hexadecanoyl-L-cysteinyl-[protein] + H2O = L-cysteinyl-[protein] + hexadecanoate + H(+). Functionally, hydrolyzes fatty acids from S-acylated cysteine residues in proteins. Has depalmitoylating activity towards nras. In Xenopus laevis (African clawed frog), this protein is Alpha/beta hydrolase domain-containing protein 17B.